Consider the following 1607-residue polypeptide: Putative molluscan insulin-related peptide(s) receptor (1607 aa).

The first 35 residues, 1–35 (MHPGSISFNMIINKCIPICLFILFIMMMEFTVSKA), serve as a signal peptide directing secretion. N-linked (GlcNAc...) asparagine glycosylation is found at Asn-82, Asn-188, Asn-245, Asn-275, Asn-332, Asn-343, Asn-495, Asn-520, Asn-663, Asn-710, Asn-778, Asn-796, Asn-802, Asn-868, Asn-879, Asn-940, and Asn-953. Fibronectin type-III domains are found at residues 517–632 (HDLN…TYPF), 636–726 (EPTD…SKEE), and 756–861 (LPDE…TKDS). Over 698–975 (EKVKIEEEGK…RPPDPESSNT (278 aa)) the chain is Extracellular. The region spanning 870-967 (TTVDTEIETN…LERFFIVPRP (98 aa)) is the Fibronectin type-III 4 domain. The helical transmembrane segment at 976-996 (LLIVAIVLAFFGVLTVSLIVA) threads the bilayer. Residues 997–1607 (CVYYKQKIRS…WSTLKMVLVL (611 aa)) lie on the Cytoplasmic side of the membrane. One can recognise a Protein kinase domain in the interval 1037–1308 (IKLIKELGQG…AIIEYLLPKL (272 aa)). ATP contacts are provided by residues 1043–1051 (LGQGSFGMV) and Lys-1072. The active-site Proton acceptor is the Asp-1173. Tyr-1199 carries the phosphotyrosine; by autocatalysis modification. 2 disordered regions span residues 1328–1352 (GAGE…LSCE) and 1501–1539 (TLNG…SSSW). The segment covering 1503-1515 (NGNQSSHNNNSFE) has biased composition (polar residues). The segment covering 1524-1538 (SGPASESSNGVSSSS) has biased composition (low complexity).

The protein belongs to the protein kinase superfamily. Tyr protein kinase family. Insulin receptor subfamily. As to quaternary structure, probable tetramer of 2 alpha and 2 beta chains linked by disulfide bonds. The alpha chains contribute to the formation of the ligand-binding domain, while the beta chains carry the kinase domain. It depends on Mn(2+) as a cofactor.

It localises to the membrane. It carries out the reaction L-tyrosyl-[protein] + ATP = O-phospho-L-tyrosyl-[protein] + ADP + H(+). This receptor probably binds to the four different molluscan insulin-related peptides and has a tyrosine-protein kinase activity. This chain is Putative molluscan insulin-related peptide(s) receptor, found in Lymnaea stagnalis (Great pond snail).